The sequence spans 275 residues: Large ribosomal subunit protein uL2 (275 aa).

Disordered regions lie at residues 36–55 (KQSKNAGRNNSGRITVRHQG) and 223–275 (VAMN…RHKR). Residues 39–48 (KNAGRNNSGR) show a composition bias toward polar residues. A compositionally biased stretch (basic and acidic residues) spans 229–239 (DHPHGGGEGRT).

It belongs to the universal ribosomal protein uL2 family. Part of the 50S ribosomal subunit. Forms a bridge to the 30S subunit in the 70S ribosome.

Its function is as follows. One of the primary rRNA binding proteins. Required for association of the 30S and 50S subunits to form the 70S ribosome, for tRNA binding and peptide bond formation. It has been suggested to have peptidyltransferase activity; this is somewhat controversial. Makes several contacts with the 16S rRNA in the 70S ribosome. This chain is Large ribosomal subunit protein uL2, found in Aromatoleum aromaticum (strain DSM 19018 / LMG 30748 / EbN1) (Azoarcus sp. (strain EbN1)).